Here is a 1467-residue protein sequence, read N- to C-terminus: Neuropathy target esterase sws (1467 aa).

The Lumenal segment spans residues Met1–Thr34. A helical membrane pass occupies residues Met35–Phe55. Topologically, residues Lys56–Asn1467 are cytoplasmic. Residue Ile174–Arg301 coordinates a nucleoside 3',5'-cyclic phosphate. Disordered stretches follow at residues Thr332–Pro353 and Met372–Gly416. A compositionally biased stretch (low complexity) spans Ser339–Ala350. Phosphoserine occurs at positions 450 and 459. A nucleoside 3',5'-cyclic phosphate-binding positions include Glu488–Arg615 and Ile604–Arg731. The region spanning Leu958–Arg1124 is the PNPLA domain. Residues Gly962 to Gly967 carry the GXGXXG motif. The GXSXG motif lies at Gly989–Gly993. Residue Ser991 is the Nucleophile of the active site. Asp1111 serves as the catalytic Proton acceptor. The short motif at Asp1111 to Gly1113 is the DGA/G element. Position 1205 is a phosphoserine (Ser1205). A disordered region spans residues Arg1377–Asn1467. Over residues Ser1382–Ala1393 the composition is skewed to polar residues. Composition is skewed to basic and acidic residues over residues Arg1396–Asn1406 and Leu1448–Arg1458.

Belongs to the NTE family. As to quaternary structure, interacts with Pka-C3; interaction inhibits the catalytic function of Pka-C3 and the esterase activity of sws.

The protein localises to the endoplasmic reticulum membrane. The enzyme catalyses a 1-acyl-sn-glycero-3-phosphocholine + H2O = sn-glycerol 3-phosphocholine + a fatty acid + H(+). In terms of biological role, phospholipase B that deacylates intracellular phosphatidylcholine (PtdCho), generating glycerophosphocholine (GroPtdCho). This deacylation occurs at both sn-2 and sn-1 positions of PtdCho. Its specific chemical modification by certain organophosphorus (OP) compounds leads to distal axonopathy. Plays a role in the signaling mechanism between neurons and glia that regulates glia wrapping during development of the adult brain. Essential for membrane lipid homeostasis and cell survival in both neurons and glia of the adult brain. This Drosophila yakuba (Fruit fly) protein is Neuropathy target esterase sws.